Reading from the N-terminus, the 140-residue chain is uncharacterized protein (140 aa).

A glycan (N-linked (GlcNAc...) asparagine) is linked at Asn27. Helical transmembrane passes span 45 to 65 (FSLY…GVYA), 76 to 96 (VWIF…TGTV), and 116 to 136 (VPLC…YSMV).

The protein belongs to the TMEM170 family.

It localises to the membrane. This is an uncharacterized protein from Saccharomyces cerevisiae (strain ATCC 204508 / S288c) (Baker's yeast).